The chain runs to 379 residues: Homoserine O-succinyltransferase (379 aa).

An AB hydrolase-1 domain is found at 48-357 (NAVLICHALS…SAHGHDAFLM (310 aa)). The active-site Nucleophile is Ser154. Substrate is bound at residue Arg224. Active-site residues include Asp319 and His352. Asp353 is a binding site for substrate.

Belongs to the AB hydrolase superfamily. MetX family. Homodimer.

The protein localises to the cytoplasm. The enzyme catalyses L-homoserine + succinyl-CoA = O-succinyl-L-homoserine + CoA. The protein operates within amino-acid biosynthesis; L-methionine biosynthesis via de novo pathway; O-succinyl-L-homoserine from L-homoserine: step 1/1. Functionally, transfers a succinyl group from succinyl-CoA to L-homoserine, forming succinyl-L-homoserine. The chain is Homoserine O-succinyltransferase from Neisseria meningitidis serogroup A / serotype 4A (strain DSM 15465 / Z2491).